The primary structure comprises 286 residues: Pantothenate synthetase (286 aa).

An ATP-binding site is contributed by 31–38 (MGALHEGH). The active-site Proton donor is His-38. Position 65 (Gln-65) interacts with (R)-pantoate. A beta-alanine-binding site is contributed by Gln-65. 153-156 (GEKD) contributes to the ATP binding site. A (R)-pantoate-binding site is contributed by Gln-159. 190-193 (LSSR) contributes to the ATP binding site.

The protein belongs to the pantothenate synthetase family. As to quaternary structure, homodimer.

The protein resides in the cytoplasm. The catalysed reaction is (R)-pantoate + beta-alanine + ATP = (R)-pantothenate + AMP + diphosphate + H(+). Its pathway is cofactor biosynthesis; (R)-pantothenate biosynthesis; (R)-pantothenate from (R)-pantoate and beta-alanine: step 1/1. Catalyzes the condensation of pantoate with beta-alanine in an ATP-dependent reaction via a pantoyl-adenylate intermediate. This Corynebacterium diphtheriae (strain ATCC 700971 / NCTC 13129 / Biotype gravis) protein is Pantothenate synthetase.